Here is a 426-residue protein sequence, read N- to C-terminus: Serine/threonine-protein kinase ssn3 (426 aa).

A Protein kinase domain is found at 39–368 (YHIVGFISSG…AKEALEHPYF (330 aa)). Residues 45–53 (ISSGTYGRV) and K69 contribute to the ATP site. D171 functions as the Proton acceptor in the catalytic mechanism. Positions 389–398 (RRITHDDNDI) are enriched in basic and acidic residues. The interval 389 to 426 (RRITHDDNDIRSGSLPGTKRSGLPDDSLMSRAAKRMKE) is disordered.

The protein belongs to the protein kinase superfamily. CMGC Ser/Thr protein kinase family. CDC2/CDKX subfamily. As to quaternary structure, component of the srb8-11 complex, a regulatory module of the Mediator complex. Mg(2+) serves as cofactor.

The protein localises to the nucleus. It carries out the reaction L-seryl-[protein] + ATP = O-phospho-L-seryl-[protein] + ADP + H(+). The enzyme catalyses L-threonyl-[protein] + ATP = O-phospho-L-threonyl-[protein] + ADP + H(+). It catalyses the reaction [DNA-directed RNA polymerase] + ATP = phospho-[DNA-directed RNA polymerase] + ADP + H(+). Functionally, component of the srb8-11 complex. The srb8-11 complex is a regulatory module of the Mediator complex which is itself involved in regulation of basal and activated RNA polymerase II-dependent transcription. The srb8-11 complex may be involved in the transcriptional repression of a subset of genes regulated by Mediator. It may inhibit the association of the Mediator complex with RNA polymerase II to form the holoenzyme complex. The srb8-11 complex phosphorylates the C-terminal domain (CTD) of the largest subunit of RNA polymerase II. The polypeptide is Serine/threonine-protein kinase ssn3 (ssn3) (Emericella nidulans (strain FGSC A4 / ATCC 38163 / CBS 112.46 / NRRL 194 / M139) (Aspergillus nidulans)).